The sequence spans 327 residues: Interleukin-12 subunit beta (327 aa).

The first 22 residues, 1-22, serve as a signal peptide directing secretion; it reads MCHQKLTISWFAVVLLASPLMA. An Ig-like C2-type domain is found at 23–106; sequence IWELEKDVYV…LSHSRLLLHK (84 aa). Cys50 and Cys90 are joined by a disulfide. 4 N-linked (GlcNAc...) asparagine glycosylation sites follow: Asn125, Asn135, Asn223, and Asn315. The Fibronectin type-III domain occupies 238 to 327; sequence PPKNLQLKPL…WSRWVSVPCS (90 aa).

Belongs to the IL-12B family. Heterodimer with IL12A; disulfide-linked. The heterodimer is known as interleukin IL-12. Heterodimer with IL23A; disulfide-linked. The heterodimer is known as interleukin IL-23. Also secreted as a monomer. Interacts with NBR1; this interaction promotes IL-12 secretion.

It is found in the secreted. Its function is as follows. Cytokine that can act as a growth factor for activated T and NK cells, enhance the lytic activity of NK/lymphokine-activated killer cells, and stimulate the production of IFN-gamma by resting PBMC. Associates with IL23A to form the IL-23 interleukin, a heterodimeric cytokine which functions in innate and adaptive immunity. IL-23 may constitute with IL-17 an acute response to infection in peripheral tissues. IL-23 binds to a heterodimeric receptor complex composed of IL12RB1 and IL23R, activates the Jak-Stat signaling cascade, stimulates memory rather than naive T-cells and promotes production of pro-inflammatory cytokines. IL-23 induces autoimmune inflammation and thus may be responsible for autoimmune inflammatory diseases and may be important for tumorigenesis. In Mesocricetus auratus (Golden hamster), this protein is Interleukin-12 subunit beta (IL12B).